The chain runs to 372 residues: Tyrosine--tRNA ligase 1 (372 aa).

5 residues coordinate L-tyrosine: Tyr37, Tyr169, Gln173, Asp176, and Gln191. A 'KMSKS' region motif is present at residues 246 to 250 (KMSKS). Lys249 lines the ATP pocket.

This sequence belongs to the class-I aminoacyl-tRNA synthetase family. TyrS type 4 subfamily. As to quaternary structure, homodimer.

It localises to the cytoplasm. The catalysed reaction is tRNA(Tyr) + L-tyrosine + ATP = L-tyrosyl-tRNA(Tyr) + AMP + diphosphate + H(+). Catalyzes the attachment of tyrosine to tRNA(Tyr) in a two-step reaction: tyrosine is first activated by ATP to form Tyr-AMP and then transferred to the acceptor end of tRNA(Tyr). This is Tyrosine--tRNA ligase 1 from Pyrobaculum aerophilum (strain ATCC 51768 / DSM 7523 / JCM 9630 / CIP 104966 / NBRC 100827 / IM2).